A 511-amino-acid chain; its full sequence is Exodeoxyribonuclease 7 large subunit (511 aa).

This sequence belongs to the XseA family. In terms of assembly, heterooligomer composed of large and small subunits.

It is found in the cytoplasm. It catalyses the reaction Exonucleolytic cleavage in either 5'- to 3'- or 3'- to 5'-direction to yield nucleoside 5'-phosphates.. Bidirectionally degrades single-stranded DNA into large acid-insoluble oligonucleotides, which are then degraded further into small acid-soluble oligonucleotides. The sequence is that of Exodeoxyribonuclease 7 large subunit from Brucella melitensis biotype 2 (strain ATCC 23457).